The sequence spans 211 residues: Thiamine-phosphate synthase (211 aa).

Residues 37–41 (QLRIK) and Asn-69 contribute to the 4-amino-2-methyl-5-(diphosphooxymethyl)pyrimidine site. Residues Asp-70 and Asp-89 each contribute to the Mg(2+) site. Ser-108 lines the 4-amino-2-methyl-5-(diphosphooxymethyl)pyrimidine pocket. 134-136 (TQT) provides a ligand contact to 2-[(2R,5Z)-2-carboxy-4-methylthiazol-5(2H)-ylidene]ethyl phosphate. Residue Lys-137 participates in 4-amino-2-methyl-5-(diphosphooxymethyl)pyrimidine binding. 2-[(2R,5Z)-2-carboxy-4-methylthiazol-5(2H)-ylidene]ethyl phosphate contacts are provided by residues Gly-166 and 186–187 (VS).

The protein belongs to the thiamine-phosphate synthase family. Requires Mg(2+) as cofactor.

The catalysed reaction is 2-[(2R,5Z)-2-carboxy-4-methylthiazol-5(2H)-ylidene]ethyl phosphate + 4-amino-2-methyl-5-(diphosphooxymethyl)pyrimidine + 2 H(+) = thiamine phosphate + CO2 + diphosphate. It carries out the reaction 2-(2-carboxy-4-methylthiazol-5-yl)ethyl phosphate + 4-amino-2-methyl-5-(diphosphooxymethyl)pyrimidine + 2 H(+) = thiamine phosphate + CO2 + diphosphate. The enzyme catalyses 4-methyl-5-(2-phosphooxyethyl)-thiazole + 4-amino-2-methyl-5-(diphosphooxymethyl)pyrimidine + H(+) = thiamine phosphate + diphosphate. Its pathway is cofactor biosynthesis; thiamine diphosphate biosynthesis; thiamine phosphate from 4-amino-2-methyl-5-diphosphomethylpyrimidine and 4-methyl-5-(2-phosphoethyl)-thiazole: step 1/1. In terms of biological role, condenses 4-methyl-5-(beta-hydroxyethyl)thiazole monophosphate (THZ-P) and 2-methyl-4-amino-5-hydroxymethyl pyrimidine pyrophosphate (HMP-PP) to form thiamine monophosphate (TMP). The chain is Thiamine-phosphate synthase from Salmonella paratyphi B (strain ATCC BAA-1250 / SPB7).